The following is a 477-amino-acid chain: Aspartyl/glutamyl-tRNA(Asn/Gln) amidotransferase subunit B (477 aa).

It belongs to the GatB/GatE family. GatB subfamily. Heterotrimer of A, B and C subunits.

It carries out the reaction L-glutamyl-tRNA(Gln) + L-glutamine + ATP + H2O = L-glutaminyl-tRNA(Gln) + L-glutamate + ADP + phosphate + H(+). The catalysed reaction is L-aspartyl-tRNA(Asn) + L-glutamine + ATP + H2O = L-asparaginyl-tRNA(Asn) + L-glutamate + ADP + phosphate + 2 H(+). In terms of biological role, allows the formation of correctly charged Asn-tRNA(Asn) or Gln-tRNA(Gln) through the transamidation of misacylated Asp-tRNA(Asn) or Glu-tRNA(Gln) in organisms which lack either or both of asparaginyl-tRNA or glutaminyl-tRNA synthetases. The reaction takes place in the presence of glutamine and ATP through an activated phospho-Asp-tRNA(Asn) or phospho-Glu-tRNA(Gln). This chain is Aspartyl/glutamyl-tRNA(Asn/Gln) amidotransferase subunit B, found in Ligilactobacillus salivarius (strain UCC118) (Lactobacillus salivarius).